The sequence spans 168 residues: MTRKQRRLMLIGVCGAVLAVALGLVLWAMRGTIVFFRSPSEIASQAVAPGVRFRLGGLVQEGSVQRGPDGRVAFVVTDNGATVPVRYQGLLPDLFREGQGVVAEGMLEPGGMFRADTVLAKHDETYMPREVADALKKQGHWQGEAKHPGGTAPAPQTASGEKPALRQQ.

Over 1-7 the chain is Cytoplasmic; sequence MTRKQRR. The chain crosses the membrane as a helical; Signal-anchor for type II membrane protein span at residues 8–28; that stretch reads LMLIGVCGAVLAVALGLVLWA. Residues 29-168 lie on the Periplasmic side of the membrane; sequence MRGTIVFFRS…SGEKPALRQQ (140 aa). Residues His-122 and Tyr-126 each coordinate heme. The segment at 134 to 168 is disordered; it reads ALKKQGHWQGEAKHPGGTAPAPQTASGEKPALRQQ.

This sequence belongs to the CcmE/CycJ family.

It localises to the cell inner membrane. Heme chaperone required for the biogenesis of c-type cytochromes. Transiently binds heme delivered by CcmC and transfers the heme to apo-cytochromes in a process facilitated by CcmF and CcmH. In Methylobacterium nodulans (strain LMG 21967 / CNCM I-2342 / ORS 2060), this protein is Cytochrome c-type biogenesis protein CcmE.